Here is a 142-residue protein sequence, read N- to C-terminus: Tol-Pal system protein TolR (142 aa).

Topologically, residues 1–17 are cytoplasmic; it reads MARARGRGRRDLKSEIN. A helical membrane pass occupies residues 18–38; it reads IVPLLDVLLVLLLIFMATAPI. Topologically, residues 39–142 are periplasmic; it reads ITQSVEVDLP…KSVGLMTQPI (104 aa).

This sequence belongs to the ExbD/TolR family. The Tol-Pal system is composed of five core proteins: the inner membrane proteins TolA, TolQ and TolR, the periplasmic protein TolB and the outer membrane protein Pal. They form a network linking the inner and outer membranes and the peptidoglycan layer.

The protein localises to the cell inner membrane. Its function is as follows. Part of the Tol-Pal system, which plays a role in outer membrane invagination during cell division and is important for maintaining outer membrane integrity. Required, with TolQ, for the proton motive force-dependent activation of TolA and for TolA-Pal interaction. This is Tol-Pal system protein TolR from Escherichia coli O157:H7.